A 259-amino-acid chain; its full sequence is Phosphoribosylaminoimidazole-succinocarboxamide synthase (259 aa).

The protein belongs to the SAICAR synthetase family.

It catalyses the reaction 5-amino-1-(5-phospho-D-ribosyl)imidazole-4-carboxylate + L-aspartate + ATP = (2S)-2-[5-amino-1-(5-phospho-beta-D-ribosyl)imidazole-4-carboxamido]succinate + ADP + phosphate + 2 H(+). It functions in the pathway purine metabolism; IMP biosynthesis via de novo pathway; 5-amino-1-(5-phospho-D-ribosyl)imidazole-4-carboxamide from 5-amino-1-(5-phospho-D-ribosyl)imidazole-4-carboxylate: step 1/2. This chain is Phosphoribosylaminoimidazole-succinocarboxamide synthase, found in Zymomonas mobilis subsp. mobilis (strain ATCC 31821 / ZM4 / CP4).